A 312-amino-acid polypeptide reads, in one-letter code: Ribosomal protein L11 methyltransferase (312 aa).

S-adenosyl-L-methionine is bound by residues Thr-162, Gly-183, Asp-205, and Asn-248.

It belongs to the methyltransferase superfamily. PrmA family.

It localises to the cytoplasm. The catalysed reaction is L-lysyl-[protein] + 3 S-adenosyl-L-methionine = N(6),N(6),N(6)-trimethyl-L-lysyl-[protein] + 3 S-adenosyl-L-homocysteine + 3 H(+). Methylates ribosomal protein L11. The sequence is that of Ribosomal protein L11 methyltransferase from Exiguobacterium sp. (strain ATCC BAA-1283 / AT1b).